We begin with the raw amino-acid sequence, 161 residues long: RNA pyrophosphohydrolase (161 aa).

The Nudix hydrolase domain maps to 12–154 (PYRPGVGMMI…KRKLYQAVVK (143 aa)). Positions 46–67 (GGIVPGETPSIAAMREMLEEIG) match the Nudix box motif.

It belongs to the Nudix hydrolase family. RppH subfamily. The cofactor is a divalent metal cation.

Functionally, accelerates the degradation of transcripts by removing pyrophosphate from the 5'-end of triphosphorylated RNA, leading to a more labile monophosphorylated state that can stimulate subsequent ribonuclease cleavage. The sequence is that of RNA pyrophosphohydrolase from Rickettsia africae (strain ESF-5).